Consider the following 470-residue polypeptide: Fumarate reductase 1 (470 aa).

FAD is bound at residue 6–20; that stretch reads VVVIGTGLAGLAAAN. Ser66 carries the phosphoserine modification. Residues His249 and Arg272 contribute to the active site.

Belongs to the FAD-dependent oxidoreductase 2 family. FRD/SDH subfamily. FAD is required as a cofactor. Post-translationally, the N-terminus is blocked.

It is found in the cytoplasm. The catalysed reaction is succinate + NAD(+) = fumarate + NADH + H(+). In terms of biological role, irreversibly catalyzes the reduction of fumarate to succinate. Together with the second isozyme of soluble fumarate reductase (OSM1), essential for anaerobic growth. Involved in maintaining redox balance. Reduction of fumarate is the main source of succinate during fermentation, and under anaerobic conditions, the formation of succinate is strictly required for the reoxidation of FADH(2). This chain is Fumarate reductase 1 (FRD1), found in Saccharomyces cerevisiae (strain ATCC 204508 / S288c) (Baker's yeast).